The chain runs to 290 residues: 4-hydroxy-tetrahydrodipicolinate synthase (290 aa).

Pyruvate is bound at residue Thr-44. Tyr-132 functions as the Proton donor/acceptor in the catalytic mechanism. The Schiff-base intermediate with substrate role is filled by Lys-160. Ile-202 contacts pyruvate.

The protein belongs to the DapA family. Homotetramer; dimer of dimers.

The protein resides in the cytoplasm. It carries out the reaction L-aspartate 4-semialdehyde + pyruvate = (2S,4S)-4-hydroxy-2,3,4,5-tetrahydrodipicolinate + H2O + H(+). It functions in the pathway amino-acid biosynthesis; L-lysine biosynthesis via DAP pathway; (S)-tetrahydrodipicolinate from L-aspartate: step 3/4. Its function is as follows. Catalyzes the condensation of (S)-aspartate-beta-semialdehyde [(S)-ASA] and pyruvate to 4-hydroxy-tetrahydrodipicolinate (HTPA). The protein is 4-hydroxy-tetrahydrodipicolinate synthase of Geotalea daltonii (strain DSM 22248 / JCM 15807 / FRC-32) (Geobacter daltonii).